Reading from the N-terminus, the 688-residue chain is Lectin-domain containing receptor kinase VI.3 (688 aa).

Residues 1 to 14 (MLVLFLLLTIPTRA) form the signal peptide. Residues 15 to 306 (QRTTTETPKT…KRGYNSQVLA (292 aa)) lie on the Extracellular side of the membrane. The segment at 22-271 (PKTEFIFRGF…AHYVMGWSFS (250 aa)) is legume-lectin like. A helical membrane pass occupies residues 307–327 (LIVALSGVTVILLALLFFFVM). The Cytoplasmic segment spans residues 328–688 (YKKRLQQGEV…VSSSSVISGR (361 aa)). A Protein kinase domain is found at 361–640 (FKENRIVGTG…LNGDDDVPEI (280 aa)). Residues 367–375 (VGTGGFGTV) and Lys-391 each bind ATP. Asp-490 functions as the Proton acceptor in the catalytic mechanism. The tract at residues 662-688 (VSSDRASSSVPSFSVTRVSSSSVISGR) is disordered.

In the C-terminal section; belongs to the protein kinase superfamily. Ser/Thr protein kinase family. This sequence in the N-terminal section; belongs to the leguminous lectin family.

The protein localises to the cell membrane. It catalyses the reaction L-seryl-[protein] + ATP = O-phospho-L-seryl-[protein] + ADP + H(+). The enzyme catalyses L-threonyl-[protein] + ATP = O-phospho-L-threonyl-[protein] + ADP + H(+). Functionally, involved in negative regulation of abscisic acid response in seed germination. The chain is Lectin-domain containing receptor kinase VI.3 (LECRK63) from Arabidopsis thaliana (Mouse-ear cress).